The sequence spans 216 residues: Sarcospan (216 aa).

The Cytoplasmic portion of the chain corresponds to M1 to P26. The chain crosses the membrane as a helical span at residues L27–M47. Over A48–T59 the chain is Extracellular. Residues P60–V80 traverse the membrane as a helical segment. The Cytoplasmic portion of the chain corresponds to S81–K95. Residues V96 to A116 form a helical membrane-spanning segment. Residues A117–L166 are Extracellular-facing. A helical membrane pass occupies residues F167–F187. The Cytoplasmic segment spans residues V188–A216.

The protein localises to the cell membrane. The protein resides in the sarcolemma. Its subcellular location is the postsynaptic cell membrane. In terms of biological role, component of the dystrophin-glycoprotein complex (DGC), a complex that spans the muscle plasma membrane and forms a link between the F-actin cytoskeleton and the extracellular matrix. Preferentially associates with the sarcoglycan subcomplex of the DGC. In Mus musculus (Mouse), this protein is Sarcospan (Sspn).